We begin with the raw amino-acid sequence, 195 residues long: Large ribosomal subunit protein bL9 (195 aa).

This sequence belongs to the bacterial ribosomal protein bL9 family.

Functionally, binds to the 23S rRNA. This is Large ribosomal subunit protein bL9 from Rhodopseudomonas palustris (strain TIE-1).